A 565-amino-acid chain; its full sequence is Sulfite reductase [NADPH] hemoprotein beta-component (565 aa).

[4Fe-4S] cluster contacts are provided by Cys-429, Cys-435, Cys-474, and Cys-478. Cys-478 provides a ligand contact to siroheme.

The protein belongs to the nitrite and sulfite reductase 4Fe-4S domain family. As to quaternary structure, alpha(8)-beta(8). The alpha component is a flavoprotein, the beta component is a hemoprotein. The cofactor is siroheme. [4Fe-4S] cluster is required as a cofactor.

It catalyses the reaction hydrogen sulfide + 3 NADP(+) + 3 H2O = sulfite + 3 NADPH + 4 H(+). It functions in the pathway sulfur metabolism; hydrogen sulfide biosynthesis; hydrogen sulfide from sulfite (NADPH route): step 1/1. In terms of biological role, component of the sulfite reductase complex that catalyzes the 6-electron reduction of sulfite to sulfide. This is one of several activities required for the biosynthesis of L-cysteine from sulfate. This Shewanella baltica (strain OS155 / ATCC BAA-1091) protein is Sulfite reductase [NADPH] hemoprotein beta-component.